The chain runs to 330 residues: Flotillin-like protein FloA (330 aa).

2 helical membrane-spanning segments follow: residues 5-25 and 28-48; these read IILPIIIIAAVLIALAILFTF and VALWISALAAGVKISIFTLIG.

The protein belongs to the flotillin-like FloA family. In terms of assembly, homooligomerizes.

It is found in the cell membrane. The protein localises to the membrane raft. Its function is as follows. Found in functional membrane microdomains (FMM) that may be equivalent to eukaryotic membrane rafts. FMMs are highly dynamic and increase in number as cells age. Flotillins are thought to be important factors in membrane fluidity. In Oceanobacillus iheyensis (strain DSM 14371 / CIP 107618 / JCM 11309 / KCTC 3954 / HTE831), this protein is Flotillin-like protein FloA.